A 484-amino-acid polypeptide reads, in one-letter code: BPI fold-containing family B member 1 (484 aa).

Residues 1 to 21 form the signal peptide; it reads MAGPWTFTLLCGLLAATLIQA. Asn-48 carries an N-linked (GlcNAc...) asparagine glycan. Residues Cys-158 and Cys-201 are joined by a disulfide bond. N-linked (GlcNAc...) asparagine glycosylation is found at Asn-264 and Asn-401.

Belongs to the BPI/LBP/Plunc superfamily. Plunc family. In terms of tissue distribution, detected in duodenum mucosal crypts of cholera patients, near Paneth cells (at protein level). Detected in trachea, nasal septal epithelium and lung.

The protein localises to the secreted. May play a role in innate immunity in mouth, nose and lungs. Binds bacterial lipopolysaccharide (LPS) and modulates the cellular responses to LPS. The protein is BPI fold-containing family B member 1 (BPIFB1) of Homo sapiens (Human).